The chain runs to 581 residues: Arginine--tRNA ligase (581 aa).

Residues 126–136 (PNLAKEMHVGH) carry the 'HIGH' region motif.

The protein belongs to the class-I aminoacyl-tRNA synthetase family. Monomer.

It is found in the cytoplasm. It catalyses the reaction tRNA(Arg) + L-arginine + ATP = L-arginyl-tRNA(Arg) + AMP + diphosphate. The protein is Arginine--tRNA ligase of Shewanella oneidensis (strain ATCC 700550 / JCM 31522 / CIP 106686 / LMG 19005 / NCIMB 14063 / MR-1).